The sequence spans 37 residues: Large ribosomal subunit protein bL36c (37 aa).

The protein belongs to the bacterial ribosomal protein bL36 family.

Its subcellular location is the plastid. It is found in the chloroplast. The sequence is that of Large ribosomal subunit protein bL36c from Nicotiana tomentosiformis (Tobacco).